The primary structure comprises 140 residues: Profilin-2 (140 aa).

A2 carries the post-translational modification N-acetylalanine.

It belongs to the profilin family. As to quaternary structure, occurs in many kinds of cells as a complex with monomeric actin in a 1:1 ratio. Interacts with PFN2. Interacts with ACTMAP (via N-terminus); the interaction may facilitate efficient cleavage of the acetylated N-terminus of immature actin by ACTMAP.

It is found in the cytoplasm. It localises to the cytoskeleton. Binds to actin and affects the structure of the cytoskeleton. At high concentrations, profilin prevents the polymerization of actin, whereas it enhances it at low concentrations. By binding to PIP2, it inhibits the formation of IP3 and DG. This chain is Profilin-2 (Pfn2), found in Rattus norvegicus (Rat).